Consider the following 281-residue polypeptide: MSHGTYYECEPRGGQQPLEFSGGRAGPGELGDMCEHEASIDLSAYIESGEEQLLSDLFAVKPAPEARGLKGPGTPAFPHYLPPDPRPFAYPPHTFGPDRKALGPGIYSSPGSYDPRAVAVKEEPRGPEGSRAASRGSYNPLQYQVAHCGQTAMHLPPTLAAPGQPLRVLKAPLATAAPPCSPLLKAPSPAGPLHKGKKAVNKDSLEYRLRRERNNIAVRKSRDKAKRRILETQQKVLEYMAENERLRSRVEQLTQELDTLRNLFRQIPEAANLIKGVGGCS.

Residues 1-30 are disordered; it reads MSHGTYYECEPRGGQQPLEFSGGRAGPGEL. Lys121 participates in a covalent cross-link: Glycyl lysine isopeptide (Lys-Gly) (interchain with G-Cter in SUMO2). Ser181 bears the Phosphoserine mark. Residues 204–267 enclose the bZIP domain; the sequence is SLEYRLRRER…DTLRNLFRQI (64 aa). Residues 208-228 form a basic motif region; it reads RLRRERNNIAVRKSRDKAKRR. The tract at residues 230 to 237 is leucine-zipper; that stretch reads LETQQKVL.

The protein belongs to the bZIP family. C/EBP subfamily. Binds DNA as a homodimer and as a heterodimer. Can form stable heterodimers with CEBPA, CEBPB and CEBPD. Interacts with GATA1 and SPI1. Interacts with SMARCD2. Post-translationally, phosphorylated. As to expression, strongest expression occurs in promyelocyte and late-myeloblast-like cell lines.

The protein localises to the nucleus. Functionally, transcriptional activator. C/EBP are DNA-binding proteins that recognize two different motifs: the CCAAT homology common to many promoters and the enhanced core homology common to many enhancers. Required for the promyelocyte-myelocyte transition in myeloid differentiation. This is CCAAT/enhancer-binding protein epsilon (CEBPE) from Homo sapiens (Human).